A 493-amino-acid polypeptide reads, in one-letter code: Vinyl phenol reductase (493 aa).

9 residues coordinate FAD: alanine 19, glutamate 38, serine 46, threonine 50, glycine 52, alanine 156, aspartate 224, asparagine 448, and valine 467.

The protein belongs to the FAD-dependent oxidoreductase 2 family. FRD/SDH subfamily. FAD serves as cofactor.

It catalyses the reaction 4-vinylphenol + NADH + H(+) = 4-ethylphenol + NAD(+). The enzyme catalyses 3,4-dihydroxystyrene + NADH + H(+) = 4-ethylcatechol + NAD(+). It carries out the reaction 2-methoxy-4-vinylphenol + NADH + H(+) = 4-ethyl-2-methoxyphenol + NAD(+). Functionally, involved in the production of ethylphenols during the degradation of hydroxycinnamic acids. Catalyzes the reduction of vinylphenols (4-vinylphenol (4-hydroxystyrene), 4-vinylcatechol (3,4-dihydroxystyrene), and 4-vinylguaiacol (2-methoxy-4-vinylphenol)) to their corresponding ethylphenols (4-ethylphenol, 4-ethylcatechol, and 4-ethylguaiacol, respectively) in the presence of NADH. These compounds are considered the most important flavor components of fermented soy sauce, and, on the other hand, are considered off flavor and responsible for sensorial wine and cider alteration. The 4-ethylphenol produced by the gut bacteria L.plantarum strain WCFS1 can get subsequent sulfation to 4-ethylphenyl sulfate (4EPS) by host sulfotransferase (SULT1A1); 4EPS can enter the brain and seems to alter brain activity. Therefore, this enzyme likely plays a role in gut microbiota-host metabolic interactions. This is Vinyl phenol reductase from Lactiplantibacillus plantarum (strain ATCC BAA-793 / NCIMB 8826 / WCFS1) (Lactobacillus plantarum).